Here is a 446-residue protein sequence, read N- to C-terminus: Adenylosuccinate synthetase (446 aa).

GTP contacts are provided by residues 12-18 (GDEGKGK) and 40-42 (GHT). The Proton acceptor role is filled by aspartate 13. Residues aspartate 13 and glycine 40 each contribute to the Mg(2+) site. IMP contacts are provided by residues 13–16 (DEGK), 38–41 (NAGH), threonine 128, arginine 142, glutamine 223, threonine 238, and arginine 302. Histidine 41 (proton donor) is an active-site residue. 298–304 (TTTGRRR) contributes to the substrate binding site. Residues arginine 304, 330-332 (KLD), and 412-414 (SLG) each bind GTP.

Belongs to the adenylosuccinate synthetase family. Homodimer. Requires Mg(2+) as cofactor.

The protein localises to the cytoplasm. The catalysed reaction is IMP + L-aspartate + GTP = N(6)-(1,2-dicarboxyethyl)-AMP + GDP + phosphate + 2 H(+). It functions in the pathway purine metabolism; AMP biosynthesis via de novo pathway; AMP from IMP: step 1/2. Functionally, plays an important role in the de novo pathway of purine nucleotide biosynthesis. Catalyzes the first committed step in the biosynthesis of AMP from IMP. The protein is Adenylosuccinate synthetase of Acaryochloris marina (strain MBIC 11017).